Reading from the N-terminus, the 147-residue chain is Hemoglobin subunit epsilon (147 aa).

Residues 3 to 147 (HFTAEEKAII…VATALAHKYH (145 aa)) form the Globin domain. Phosphoserine is present on residues Ser14 and Ser51. Residues His64 and His93 each contribute to the heme b site.

Belongs to the globin family. Heterotetramer of two alpha chains and two epsilon chains in early embryonic hemoglobin Gower-2; two zeta chains and two epsilon chains in early embryonic hemoglobin Gower-1. Red blood cells.

The epsilon chain is a beta-type chain of early mammalian embryonic hemoglobin. This is Hemoglobin subunit epsilon (HBE1) from Otolemur crassicaudatus (Brown greater galago).